Reading from the N-terminus, the 225-residue chain is Cardiotrophin-like cytokine factor 1 (225 aa).

Residues 1-27 (MDLRAGDSWGMLACLCTVLWHLPAVPA) form the signal peptide. Asn29 carries N-linked (GlcNAc...) asparagine glycosylation.

It belongs to the IL-6 superfamily. In terms of assembly, forms a heteromeric complex with cardiotrophin-like cytokine CRLF1/CLF-1; the CRLF1-CLCF1 complex is a ligand for the ciliary neurotrophic factor receptor/CNTFR. The CRLF1-CLCF1 heterodimer binds SORL1 (via N-terminal ectodomain); within this complex, the interaction is mediated predominantly by the CRLF1 moiety. The tripartite signaling complex formed by CRLF1, CLCF1 and CNTFR also binds SORL1. As to expression, expressed predominantly in lymph nodes, spleen, peripheral blood lymphocytes, bone marrow, and fetal liver.

It localises to the secreted. In terms of biological role, in complex with CRLF1, forms a heterodimeric neurotropic cytokine that plays a crucial role during neuronal development. Also stimulates B-cells. Binds to and activates the ILST/gp130 receptor. This is Cardiotrophin-like cytokine factor 1 (CLCF1) from Homo sapiens (Human).